The chain runs to 138 residues: Nuclear membrane organization protein APQ12 (138 aa).

The Cytoplasmic segment spans residues 1–39 (MDATQPQYELSVVTQCLKSAIDVIQWLIPTITKFSQSHP). Residues 40-58 (LVFQLLFIFFTFYVFYKLL) traverse the membrane as a helical segment. Residues 59 to 67 (MNFITLVKR) are Perinuclear space-facing. The helical transmembrane segment at 68-84 (FLYLTLVVTCIGIYMRG) threads the bilayer. Residues 85 to 138 (SQQFLTVDLLNFYNFVMSNRYYAFKIYTLFINALEREINTVYHLAQMKMEQLLK) are Cytoplasmic-facing.

This sequence belongs to the APQ12 family.

It localises to the nucleus membrane. The protein resides in the endoplasmic reticulum membrane. Its function is as follows. Involved in the regulation of lipid homeostasis in the endoplasmic reticulum, thereby impacting nuclear pore complex biogenesis and localization, and nucleocytoplasmic mRNA transport. The polypeptide is Nuclear membrane organization protein APQ12 (APQ12) (Saccharomyces cerevisiae (strain ATCC 204508 / S288c) (Baker's yeast)).